The sequence spans 461 residues: Cysteine--tRNA ligase (461 aa).

Cysteine 28 contacts Zn(2+). Residues isoleucine 30–histidine 40 carry the 'HIGH' region motif. Cysteine 209, histidine 234, and glutamate 238 together coordinate Zn(2+). A 'KMSKS' region motif is present at residues lysine 266 to serine 270. Residue lysine 269 coordinates ATP.

This sequence belongs to the class-I aminoacyl-tRNA synthetase family. Monomer. It depends on Zn(2+) as a cofactor.

The protein resides in the cytoplasm. It catalyses the reaction tRNA(Cys) + L-cysteine + ATP = L-cysteinyl-tRNA(Cys) + AMP + diphosphate. This is Cysteine--tRNA ligase from Escherichia coli (strain K12 / MC4100 / BW2952).